Consider the following 142-residue polypeptide: Nitrogen fixation protein NifU 2 (142 aa).

Residues 1–36 form a disordered region; sequence MKDLFDESLTLDTGSAAPGTAPGRPRRRQPAGGKAP. Positions 14–23 are enriched in low complexity; sequence GSAAPGTAPG.

It belongs to the NifU family.

Functionally, may be involved in the formation or repair of [Fe-S] clusters present in iron-sulfur proteins. The sequence is that of Nitrogen fixation protein NifU 2 (nifU2) from Rhodobacter capsulatus (Rhodopseudomonas capsulata).